Consider the following 334-residue polypeptide: Glycerol-3-phosphate dehydrogenase [NAD(P)+] (334 aa).

NADPH contacts are provided by Ser-14, Tyr-15, His-35, and Lys-109. Sn-glycerol 3-phosphate is bound by residues Lys-109, Gly-138, and Thr-140. Ala-142 provides a ligand contact to NADPH. Sn-glycerol 3-phosphate contacts are provided by Lys-194, Asp-247, Ser-257, Arg-258, and Asn-259. Catalysis depends on Lys-194, which acts as the Proton acceptor. Arg-258 contributes to the NADPH binding site. NADPH contacts are provided by Val-282 and Glu-284.

The protein belongs to the NAD-dependent glycerol-3-phosphate dehydrogenase family.

The protein localises to the cytoplasm. It catalyses the reaction sn-glycerol 3-phosphate + NAD(+) = dihydroxyacetone phosphate + NADH + H(+). It carries out the reaction sn-glycerol 3-phosphate + NADP(+) = dihydroxyacetone phosphate + NADPH + H(+). It participates in membrane lipid metabolism; glycerophospholipid metabolism. Functionally, catalyzes the reduction of the glycolytic intermediate dihydroxyacetone phosphate (DHAP) to sn-glycerol 3-phosphate (G3P), the key precursor for phospholipid synthesis. This chain is Glycerol-3-phosphate dehydrogenase [NAD(P)+], found in Tolumonas auensis (strain DSM 9187 / NBRC 110442 / TA 4).